Reading from the N-terminus, the 528-residue chain is MSTVNVQIGLHELLNGSNAQIQLSVPQLVEKVLMRNEGKLTSTGAVSASTGKYTGRSPKDKFIVKEASVADKIAWGAVNQPISEEHFNKLYTKVLEYLKEKEELFVFKGFAGADRNYRLPIQVINEYAWHNLFVHQLFIRPTEEELTTHESGFTIVSAPNFKADPAVDGTNSEAFIMVSFEKRIVLIGGTEYAGEMKKSIFSIMNFLLPEQDILSMHCSANVGEEGDVALFFGLSGTGKTTLSADPNRKLIGDDEHGWSDNGVFNIEGGCYAKCVNLSHEKEPQIFDAIKFGSVLENVIINNQTRIADYNDTTLTENTRAAYPMHAIDNIVLPSVAGHPNTIIFLTADASGVLPPISKLSKEQAMYHFLSGYTSKLAGTERGVTSPQATFSTCFGSPFLPLDASRYAEMLGEKIEKHDAKVFLVNTGWTGGEYGVGKRMNLGYTRAMIQAALSGELAKTETAKHDIFGLEVPLHVPGVPDEVLMPEQTWADKAAYKAKAIELANEFKENFKKFESVSEDIINLGGPIA.

Substrate contacts are provided by Arg-56, Tyr-192, and Lys-198. ATP-binding positions include Lys-198, His-217, and 233-241 (GLSGTGKTT). Residues Lys-198 and His-217 each coordinate Mn(2+). Asp-254 serves as a coordination point for Mn(2+). Residues Glu-282, Arg-319, and Thr-444 each contribute to the ATP site. Arg-319 lines the substrate pocket.

It belongs to the phosphoenolpyruvate carboxykinase (ATP) family. Requires Mn(2+) as cofactor.

The protein resides in the cytoplasm. The catalysed reaction is oxaloacetate + ATP = phosphoenolpyruvate + ADP + CO2. It participates in carbohydrate biosynthesis; gluconeogenesis. Involved in the gluconeogenesis. Catalyzes the conversion of oxaloacetate (OAA) to phosphoenolpyruvate (PEP) through direct phosphoryl transfer between the nucleoside triphosphate and OAA. In Bacillus cereus (strain G9842), this protein is Phosphoenolpyruvate carboxykinase (ATP).